A 200-amino-acid polypeptide reads, in one-letter code: Snake venom metalloproteinase hemorrhagic factor 2 (200 aa).

The Peptidase M12B domain maps to 4–200; it reads KYIELVVVAD…RKPQCILNKP (197 aa). E7 contacts Ca(2+). N70 carries N-linked (GlcNAc...) asparagine glycosylation. D91 is a Ca(2+) binding site. Disulfide bonds link C115/C195, C155/C179, and C157/C162. A Zn(2+)-binding site is contributed by H140. The active site involves E141. 2 residues coordinate Zn(2+): H144 and H150. Positions 195 and 198 each coordinate Ca(2+).

This sequence belongs to the venom metalloproteinase (M12B) family. P-I subfamily. Monomer. Requires Zn(2+) as cofactor. As to expression, expressed by the venom gland.

It is found in the secreted. Snake venom zinc metalloproteinase that induces weak hemorrhage and mild myonecrosis. Shows mild myotoxicity by killing myocytes. Also induces edema in the mouse footpad at doses where hemorrhage is absent. In vitro, degrades laminin, fibronectin, and type IV collagen, suggesting this toxin play a role in local tissue damage by degrading extracellular matrix, and possibly by degrading muscle extracellular matrix. Hemorrhage is not due to cytotoxicity towards endothelial cells in culture, and may only play a minor role in local bleeding characteristic of L.muta envenomations. Also induces the synthesis of several endogenous matrix metalloproteinases, which in turn, may participate in extracellular matrix degradation. The protein is Snake venom metalloproteinase hemorrhagic factor 2 of Lachesis muta muta (Bushmaster).